A 516-amino-acid polypeptide reads, in one-letter code: GTPase Obg (516 aa).

Residues 4 to 161 (PTFVDRVTLH…LEIVLELKVV (158 aa)) form the Obg domain. In terms of domain architecture, OBG-type G spans 162 to 332 (ADIGLVGFPS…LTFAMAGIVE (171 aa)). Residues 168–175 (GFPSAGKS), 193–197 (FTTLV), 214–217 (DVPG), 284–287 (NKVD), and 313–315 (SAA) each bind GTP. Mg(2+) is bound by residues Ser175 and Thr195. One can recognise an OCT domain in the interval 351 to 432 (PSVDGSDAFT…ENAVVFDFKP (82 aa)). The segment covering 466 to 491 (AMADRAEGETRADVARRLDRPAREDG) has biased composition (basic and acidic residues). Residues 466–516 (AMADRAEGETRADVARRLDRPAREDGGAYGPQSYEIGGRDDPDWAEEDLGE) form a disordered region.

It belongs to the TRAFAC class OBG-HflX-like GTPase superfamily. OBG GTPase family. As to quaternary structure, monomer. Mg(2+) is required as a cofactor.

The protein resides in the cytoplasm. Functionally, an essential GTPase which binds GTP, GDP and possibly (p)ppGpp with moderate affinity, with high nucleotide exchange rates and a fairly low GTP hydrolysis rate. Plays a role in control of the cell cycle, stress response, ribosome biogenesis and in those bacteria that undergo differentiation, in morphogenesis control. This chain is GTPase Obg, found in Nocardioides sp. (strain ATCC BAA-499 / JS614).